We begin with the raw amino-acid sequence, 190 residues long: Large ribosomal subunit protein uL10 (190 aa).

It belongs to the universal ribosomal protein uL10 family. Part of the ribosomal stalk of the 50S ribosomal subunit. The N-terminus interacts with L11 and the large rRNA to form the base of the stalk. The C-terminus forms an elongated spine to which L12 dimers bind in a sequential fashion forming a multimeric L10(L12)X complex.

Its function is as follows. Forms part of the ribosomal stalk, playing a central role in the interaction of the ribosome with GTP-bound translation factors. This is Large ribosomal subunit protein uL10 from Trichodesmium erythraeum (strain IMS101).